The primary structure comprises 121 residues: Large ribosomal subunit protein uL22c (121 aa).

The protein belongs to the universal ribosomal protein uL22 family. Part of the 50S ribosomal subunit.

It localises to the plastid. Its subcellular location is the chloroplast. In terms of biological role, this protein binds specifically to 23S rRNA. The globular domain of the protein is located near the polypeptide exit tunnel on the outside of the subunit, while an extended beta-hairpin is found that lines the wall of the exit tunnel in the center of the 70S ribosome. The protein is Large ribosomal subunit protein uL22c (rpl22) of Guillardia theta (Cryptophyte).